The chain runs to 308 residues: tRNA dimethylallyltransferase 2 (308 aa).

Residue glycine 13 to threonine 20 coordinates ATP. Position 15–20 (threonine 15–threonine 20) interacts with substrate. Residues aspartate 38–glutamine 41 are interaction with substrate tRNA.

This sequence belongs to the IPP transferase family. Monomer. It depends on Mg(2+) as a cofactor.

It catalyses the reaction adenosine(37) in tRNA + dimethylallyl diphosphate = N(6)-dimethylallyladenosine(37) in tRNA + diphosphate. Catalyzes the transfer of a dimethylallyl group onto the adenine at position 37 in tRNAs that read codons beginning with uridine, leading to the formation of N6-(dimethylallyl)adenosine (i(6)A). In Bacteroides fragilis (strain YCH46), this protein is tRNA dimethylallyltransferase 2.